Here is a 458-residue protein sequence, read N- to C-terminus: MQQSVRKLFGTDGVRGRANFEPMTVETTVLLGKAVARVLREGRSGKHRVVVGKDTRLSGYMFENALIAGLNSMGIETLVLGPIPTPGVAFITRAYRADAGIMISASHNPYRDNGIKIFSLEGFKISDVLEQRIETMVSEADFGPLPEDHAVGKNKRVIDAMGRYVEFVKATFPKGRTLKGLKIVLDCAHGASYKVAPSVFEELDAEVICYGCEPTGININEHCGALFPQVIQKAVIEHQAHLGIALDGDGDRIIMVDEKGHIVDGDMILSICAGDLKKRSALPHNRVVATIMTNFGVLKYLEGLGLQVFTSPVGDRHVLHAMLEHEVTLGGEQSGHMIFLDYNTTGDGIVSALQVLRIMIESESMLSDLTAPIVKSPQTLINVAVREKIPLETIPLIERTLRDVQDALGPSGRILLRYSGTENICRVMVEGHKKHQVDCLAKALADVIDAELGTGSRE.

S106 (phosphoserine intermediate) is an active-site residue. Residues S106, D247, D249, and D251 each contribute to the Mg(2+) site. S106 is subject to Phosphoserine.

Belongs to the phosphohexose mutase family. The cofactor is Mg(2+). In terms of processing, activated by phosphorylation.

The catalysed reaction is alpha-D-glucosamine 1-phosphate = D-glucosamine 6-phosphate. In terms of biological role, catalyzes the conversion of glucosamine-6-phosphate to glucosamine-1-phosphate. This chain is Phosphoglucosamine mutase, found in Chlamydia pneumoniae (Chlamydophila pneumoniae).